We begin with the raw amino-acid sequence, 970 residues long: Bifunctional glutamine synthetase adenylyltransferase/adenylyl-removing enzyme (970 aa).

The segment at 1–454 (MNSLPPRPSL…HFQQVFAAPQ (454 aa)) is adenylyl removase. Residues 468 to 970 (QAVLASIWAG…WRRVMEEGKA (503 aa)) are adenylyl transferase.

The protein belongs to the GlnE family. The cofactor is Mg(2+).

It carries out the reaction [glutamine synthetase]-O(4)-(5'-adenylyl)-L-tyrosine + phosphate = [glutamine synthetase]-L-tyrosine + ADP. The enzyme catalyses [glutamine synthetase]-L-tyrosine + ATP = [glutamine synthetase]-O(4)-(5'-adenylyl)-L-tyrosine + diphosphate. Functionally, involved in the regulation of glutamine synthetase GlnA, a key enzyme in the process to assimilate ammonia. When cellular nitrogen levels are high, the C-terminal adenylyl transferase (AT) inactivates GlnA by covalent transfer of an adenylyl group from ATP to specific tyrosine residue of GlnA, thus reducing its activity. Conversely, when nitrogen levels are low, the N-terminal adenylyl removase (AR) activates GlnA by removing the adenylyl group by phosphorolysis, increasing its activity. The regulatory region of GlnE binds the signal transduction protein PII (GlnB) which indicates the nitrogen status of the cell. The sequence is that of Bifunctional glutamine synthetase adenylyltransferase/adenylyl-removing enzyme from Thioalkalivibrio sulfidiphilus (strain HL-EbGR7).